Consider the following 256-residue polypeptide: Small ribosomal subunit protein eS1 (256 aa).

Positions M1–K18 are enriched in basic residues. The disordered stretch occupies residues M1 to D22. A2 bears the N-acetylalanine; partial mark.

Belongs to the eukaryotic ribosomal protein eS1 family. In terms of assembly, component of the small ribosomal subunit. Mature ribosomes consist of a small (40S) and a large (60S) subunit. The 40S subunit contains about 33 different proteins and 1 molecule of RNA (18S). The 60S subunit contains about 49 different proteins and 3 molecules of RNA (25S, 5.8S and 5S).

It localises to the cytoplasm. In Pyricularia oryzae (strain Y34) (Rice blast fungus), this protein is Small ribosomal subunit protein eS1.